Reading from the N-terminus, the 76-residue chain is Large ribosomal subunit protein uL29 (76 aa).

Belongs to the universal ribosomal protein uL29 family.

This chain is Large ribosomal subunit protein uL29, found in Corynebacterium aurimucosum (strain ATCC 700975 / DSM 44827 / CIP 107346 / CN-1) (Corynebacterium nigricans).